We begin with the raw amino-acid sequence, 474 residues long: Trigger factor (474 aa).

Residues 171–258 enclose the PPIase FKBP-type domain; the sequence is GDVAVIDFQG…LKELKTRDLP (88 aa). Positions 441–474 are disordered; it reads TEVDAASATVETTATETAEEAPEAPKAKKGKKKA. The segment covering 444-456 has biased composition (low complexity); the sequence is DAASATVETTATE.

This sequence belongs to the FKBP-type PPIase family. Tig subfamily.

The protein resides in the cytoplasm. The enzyme catalyses [protein]-peptidylproline (omega=180) = [protein]-peptidylproline (omega=0). Functionally, involved in protein export. Acts as a chaperone by maintaining the newly synthesized protein in an open conformation. Functions as a peptidyl-prolyl cis-trans isomerase. This is Trigger factor from Synechococcus elongatus (strain ATCC 33912 / PCC 7942 / FACHB-805) (Anacystis nidulans R2).